The chain runs to 307 residues: Acyl transferase (307 aa).

Catalysis depends on charge relay system residues S116, D213, and H243.

This sequence belongs to the LuxD family.

The protein operates within lipid metabolism; fatty acid reduction for biolumincescence. In terms of biological role, acyl transferase is part of the fatty acid reductase system required for aldehyde biosynthesis; it produces fatty acids for the luminescent reaction. This Photorhabdus luminescens (Xenorhabdus luminescens) protein is Acyl transferase.